A 533-amino-acid chain; its full sequence is CTP synthase (533 aa).

Residues 1 to 264 (MKYIFVTGGV…GKLVTEKLNL (264 aa)) are amidoligase domain. CTP is bound at residue Ser12. Residue Ser12 coordinates UTP. ATP contacts are provided by residues 13–18 (SLGKGI) and Asp70. 2 residues coordinate Mg(2+): Asp70 and Glu138. CTP-binding positions include 145 to 147 (DIE), 185 to 190 (KTKPTQ), and Lys221. UTP-binding positions include 185–190 (KTKPTQ) and Lys221. 237 to 239 (KDA) serves as a coordination point for ATP. One can recognise a Glutamine amidotransferase type-1 domain in the interval 289-533 (TIGIVGKYIE…HGLVKASIEK (245 aa)). Residue Gly357 coordinates L-glutamine. Cys384 serves as the catalytic Nucleophile; for glutamine hydrolysis. L-glutamine contacts are provided by residues 385 to 388 (LGMQ), Glu407, and Arg464. Active-site residues include His509 and Glu511.

The protein belongs to the CTP synthase family. In terms of assembly, homotetramer.

The catalysed reaction is UTP + L-glutamine + ATP + H2O = CTP + L-glutamate + ADP + phosphate + 2 H(+). The enzyme catalyses L-glutamine + H2O = L-glutamate + NH4(+). It carries out the reaction UTP + NH4(+) + ATP = CTP + ADP + phosphate + 2 H(+). It participates in pyrimidine metabolism; CTP biosynthesis via de novo pathway; CTP from UDP: step 2/2. Allosterically activated by GTP, when glutamine is the substrate; GTP has no effect on the reaction when ammonia is the substrate. The allosteric effector GTP functions by stabilizing the protein conformation that binds the tetrahedral intermediate(s) formed during glutamine hydrolysis. Inhibited by the product CTP, via allosteric rather than competitive inhibition. Catalyzes the ATP-dependent amination of UTP to CTP with either L-glutamine or ammonia as the source of nitrogen. Regulates intracellular CTP levels through interactions with the four ribonucleotide triphosphates. This Methanococcus maripaludis (strain DSM 14266 / JCM 13030 / NBRC 101832 / S2 / LL) protein is CTP synthase.